A 191-amino-acid chain; its full sequence is Potassium-transporting ATPase KdpC subunit (191 aa).

A helical membrane pass occupies residues 8–28 (LFLFLLLLLVTGLAYPLLTTV).

Belongs to the KdpC family. The system is composed of three essential subunits: KdpA, KdpB and KdpC.

Its subcellular location is the cell inner membrane. In terms of biological role, part of the high-affinity ATP-driven potassium transport (or Kdp) system, which catalyzes the hydrolysis of ATP coupled with the electrogenic transport of potassium into the cytoplasm. This subunit acts as a catalytic chaperone that increases the ATP-binding affinity of the ATP-hydrolyzing subunit KdpB by the formation of a transient KdpB/KdpC/ATP ternary complex. In Pectobacterium atrosepticum (strain SCRI 1043 / ATCC BAA-672) (Erwinia carotovora subsp. atroseptica), this protein is Potassium-transporting ATPase KdpC subunit.